Reading from the N-terminus, the 134-residue chain is Calcitonin gene-related peptide 2 (134 aa).

Residues 1–26 form the signal peptide; it reads MDFWKFFPFLALSSMWVLCLASSLQA. The propeptide occupies 27 to 86; sequence APFRSALESSLDLGTLSDQEKHLLLAALIQDYEQKARKLEQEEQETEGSRKGSSSSVISQ. The tract at residues 65–91 is disordered; it reads LEQEEQETEGSRKGSSSSVISQKRSCN. Positions 77 to 89 are enriched in low complexity; that stretch reads KGSSSSVISQKRS. C90 and C95 are disulfide-bonded. Residue F125 is modified to Phenylalanine amide. A propeptide spanning residues 131-134 is cleaved from the precursor; sequence DLRV.

Belongs to the calcitonin family.

It is found in the secreted. In terms of biological role, CALCB/CGRP2 is a peptide hormone that induces vasodilation mediated by the CALCRL-RAMP1 receptor complex. Dilates a variety of vessels including the coronary, cerebral and systemic vasculature. Its abundance in the CNS also points toward a neurotransmitter or neuromodulator role. This is Calcitonin gene-related peptide 2 from Rattus norvegicus (Rat).